Reading from the N-terminus, the 113-residue chain is Large ribosomal subunit protein eL30 (113 aa).

It belongs to the eukaryotic ribosomal protein eL30 family.

In Spodoptera frugiperda (Fall armyworm), this protein is Large ribosomal subunit protein eL30 (RpL30).